The following is a 149-amino-acid chain: RALGPLIPSRLFDQFFGEGLLEYDLLPLFSSTISPYYRQSLFRSVLESGISEVRSDREKFTIMLDVKHFSPEDLSVKIIDDFVEIHGKHSERQDDHGYISREFHRRYRLPSNVDQSAITCSLSSDGMLTFSGPKVQANMDPSHSERPIP.

Residues Leu-41–Pro-149 form the sHSP domain. Residues His-89, Glu-91, His-96, and His-143 each contribute to the Zn(2+) site.

The protein belongs to the small heat shock protein (HSP20) family. In terms of assembly, heteropolymer composed of three CRYAA and one CRYAB subunits. Inter-subunit bridging via zinc ions enhances stability, which is crucial as there is no protein turn over in the lens. Can also form homodimers and homotetramers (dimers of dimers) which serve as the building blocks of homooligomers. Within homooligomers, the zinc-binding motif is created from residues of 3 different molecules. His-89 and Glu-91 from one molecule are ligands of the zinc ion, and His-96 and His-143 residues from additional molecules complete the site with tetrahedral coordination geometry.

It localises to the cytoplasm. Its subcellular location is the nucleus. Its function is as follows. Contributes to the transparency and refractive index of the lens. May act as a chaperone, preventing aggregation of various proteins under a wide range of stress conditions. The chain is Alpha-crystallin A chain (CRYAA) from Eudromia elegans (Elegant crested-tinamou).